Here is a 221-residue protein sequence, read N- to C-terminus: Thymidylate kinase (221 aa).

10-17 (GIDGAGKT) serves as a coordination point for ATP.

It belongs to the thymidylate kinase family.

It catalyses the reaction dTMP + ATP = dTDP + ADP. Functionally, phosphorylation of dTMP to form dTDP in both de novo and salvage pathways of dTTP synthesis. This chain is Thymidylate kinase, found in Desulforudis audaxviator (strain MP104C).